Here is a 157-residue protein sequence, read N- to C-terminus: Protein-export protein SecB (157 aa).

Belongs to the SecB family. Homotetramer, a dimer of dimers. One homotetramer interacts with 1 SecA dimer.

It is found in the cytoplasm. One of the proteins required for the normal export of preproteins out of the cell cytoplasm. It is a molecular chaperone that binds to a subset of precursor proteins, maintaining them in a translocation-competent state. It also specifically binds to its receptor SecA. The protein is Protein-export protein SecB of Magnetococcus marinus (strain ATCC BAA-1437 / JCM 17883 / MC-1).